We begin with the raw amino-acid sequence, 243 residues long: Vesicle-associated membrane protein-associated protein B (243 aa).

At Ala2 the chain carries N-acetylalanine. Residues 2 to 218 (AKVEQVLSLE…AALAASGKEE (217 aa)) are Cytoplasmic-facing. In terms of domain architecture, MSP spans 7–124 (VLSLEPQHEL…MDSKLRCVFE (118 aa)). Ser146 bears the Phosphoserine mark. A Glycyl lysine isopeptide (Lys-Gly) (interchain with G-Cter in SUMO1) cross-link involves residue Lys147. Residue Ser159 is modified to Phosphoserine. Positions 161 to 196 (LDDAEVKKVMEECRRLQGEVQRLREESRQLKEEDGL) form a coiled coil. Ser206 is subject to Phosphoserine. The helical; Anchor for type IV membrane protein transmembrane segment at 219 to 239 (GLSARLLALVVLFFIVGVIIG) threads the bilayer.

Belongs to the VAMP-associated protein (VAP) (TC 9.B.17) family. As to quaternary structure, homodimer, and heterodimer with VAPA. Interacts with VAMP1 and VAMP2. Interacts (via MSP domain) with ZFYVE27. Interacts with RMDN3. Interacts with KIF5A in a ZFYVE27-dependent manner. Interacts (via MSP domain) with STARD3 (via phospho-FFAT motif). Interacts with STARD3NL (via FFAT motif). Interacts with CERT1. Interacts with PLEKHA3 and SACM1L to form a ternary complex. Interacts with VPS13A (via FFAT motif). Interacts with RB1CC1 (via phosphorylated FFAT motif), MIGA2 (via phosphorylated FFAT motif), RMDN3 (via phosphorylated FFAT motif), OSBPL1A (via FFAT motif), KCNB1 (via phosphorylated FFAT motif) and KCNB2 (via phosphorylated FFAT motif). Interacts (via MSP domain) with WDR44; the interactions connect the endoplasmic reticulum (ER) with the endosomal tubule. Ubiquitous.

The protein localises to the endoplasmic reticulum membrane. In terms of biological role, endoplasmic reticulum (ER)-anchored protein that mediates the formation of contact sites between the ER and endosomes via interaction with FFAT motif-containing proteins such as STARD3 or WDR44. Interacts with STARD3 in a FFAT motif phosphorylation dependent manner. Via interaction with WDR44 participates in neosynthesized protein export. Participates in the endoplasmic reticulum unfolded protein response (UPR) by inducing ERN1/IRE1 activity. Involved in cellular calcium homeostasis regulation. The sequence is that of Vesicle-associated membrane protein-associated protein B from Rattus norvegicus (Rat).